A 97-amino-acid chain; its full sequence is Co-chaperonin GroES (97 aa).

Belongs to the GroES chaperonin family. In terms of assembly, heptamer of 7 subunits arranged in a ring. Interacts with the chaperonin GroEL.

The protein resides in the cytoplasm. Its function is as follows. Together with the chaperonin GroEL, plays an essential role in assisting protein folding. The GroEL-GroES system forms a nano-cage that allows encapsulation of the non-native substrate proteins and provides a physical environment optimized to promote and accelerate protein folding. GroES binds to the apical surface of the GroEL ring, thereby capping the opening of the GroEL channel. The protein is Co-chaperonin GroES of Pseudomonas fluorescens (strain Pf0-1).